A 461-amino-acid polypeptide reads, in one-letter code: Photosystem II CP43 reaction center protein (461 aa).

Residues 1–2 (ME) constitute a propeptide that is removed on maturation. Threonine 3 is modified (N-acetylthreonine). Threonine 3 is subject to Phosphothreonine. Helical transmembrane passes span 57–81 (LFEVSHFVPEKPMYEQGLILLPHIA), 122–143 (LIGPETLEESFPFFGYIWKDKN), 166–188 (KAMYFGGIYDTWAPGGGDVRIIT), 243–263 (TPWPWARRAFVWSGEAYLSYS), and 279–300 (WFNNTAYPSEFYGPTGPEASQA). A [CaMn4O5] cluster-binding site is contributed by glutamate 355. A helical membrane pass occupies residues 435-459 (RARAAAAGFEKGIDRVDEPVLSMRP).

Belongs to the PsbB/PsbC family. PsbC subfamily. PSII is composed of 1 copy each of membrane proteins PsbA, PsbB, PsbC, PsbD, PsbE, PsbF, PsbH, PsbI, PsbJ, PsbK, PsbL, PsbM, PsbT, PsbX, PsbY, PsbZ, Psb30/Ycf12, at least 3 peripheral proteins of the oxygen-evolving complex and a large number of cofactors. It forms dimeric complexes. It depends on Binds multiple chlorophylls and provides some of the ligands for the Ca-4Mn-5O cluster of the oxygen-evolving complex. It may also provide a ligand for a Cl- that is required for oxygen evolution. PSII binds additional chlorophylls, carotenoids and specific lipids. as a cofactor.

The protein resides in the plastid. It is found in the chloroplast thylakoid membrane. In terms of biological role, one of the components of the core complex of photosystem II (PSII). It binds chlorophyll and helps catalyze the primary light-induced photochemical processes of PSII. PSII is a light-driven water:plastoquinone oxidoreductase, using light energy to abstract electrons from H(2)O, generating O(2) and a proton gradient subsequently used for ATP formation. The sequence is that of Photosystem II CP43 reaction center protein from Chlamydomonas moewusii (Chlamydomonas eugametos).